Reading from the N-terminus, the 611-residue chain is MSCKKQRSRKHSVNEKCNMKIEHYFSPVSKEQQNNCSTSLMRMESRGDPRATTNTQAQRFHSPKKNPEDQTMPQNRTIYVTLKVNHRRNQDMKLKLTHSENSSLYMALNTLQAVRKEIETHQGQEMLVRGTEGIKEYINLGMPLSCFPEGGQVVITFSQSKSKQKEDNHIFGRQDKASTECVKFYIHAIGIGKCKRRIVKCGKLHKKGRKLCVYAFKGETIKDALCKDGRFLSFLENDDWKLIENNDTILESTQPVDELEGRYFQVEVEKRMVPSAAASQNPESEKRNTCVLREQIVAQYPSLKRESEKIIENFKKKMKVKNGETLFELHRTTFGKVTKNSSSIKVVKLLVRLSDSVGYLFWDSATTGYATCFVFKGLFILTCRHVIDSIVGDGIEPSKWATIIGQCVRVTFGYEELKDKETNYFFVEPWFEIHNEELDYAVLKLKENGQQVPMELYNGITPVPLSGLIHIIGHPYGEKKQIDACAVIPQGQRAKKCQERVQSKKAESPEYVHMYTQRSFQKIVHNPDVITYDTEFFFGASGSPVFDSKGSLVAMHAAGFAYTYQNETRSIIEFGSTMESILLDIKQRHKPWYEEVFVNQQDVEMMSDEDL.

The PIP-box motif lies at 16–28 (KCNMKIEHYFSPV). K20 is covalently cross-linked (Glycyl lysine isopeptide (Lys-Gly) (interchain with G-Cter in SUMO2)). Phosphoserine is present on S26. Residues K30 and K65 each participate in a glycyl lysine isopeptide (Lys-Gly) (interchain with G-Cter in SUMO2) cross-link. The interval 44-73 (ESRGDPRATTNTQAQRFHSPKKNPEDQTMP) is disordered. The interaction with SV40 large T antigen stretch occupies residues 336 to 611 (KVTKNSSSIK…DVEMMSDEDL (276 aa)). Residues H385, D439, and S541 each act as charge relay system in the active site.

Belongs to the FAM111 family. In terms of assembly, interacts (via PIP-box) with PCNA; then interaction is direct. (Microbial infection) Interacts with SV40 virus large T antigen and this interaction is required for efficient viral replication and sustained viral gene expression in restrictive cell types. As to quaternary structure, (Microbial infection) Interacts with vaccinia virus protein OPG079; this interaction promotes the degradation of OPG079. In terms of processing, autocatalytically cleaved; activating the protein. Autocatalytic cleavage takes place in trans.

It localises to the nucleus. Its subcellular location is the chromosome. It is found in the cytoplasm. Functionally, single-stranded DNA-binding serine protease that mediates the proteolytic cleavage of covalent DNA-protein cross-links (DPCs) during DNA synthesis, thereby playing a key role in maintaining genomic integrity. DPCs are highly toxic DNA lesions that interfere with essential chromatin transactions, such as replication and transcription, and which are induced by reactive agents, such as UV light or formaldehyde. Protects replication fork from stalling by removing DPCs, such as covalently trapped topoisomerase 1 (TOP1) adducts on DNA lesion, or poly(ADP-ribose) polymerase 1 (PARP1)-DNA complexes trapped by PARP inhibitors. Required for PCNA loading on replication sites. Promotes S-phase entry and DNA synthesis. Also acts as a restriction factor for some viruses including SV40 polyomavirus and vaccinia virus. Mechanistically, affects nuclear barrier function during viral replication by mediating the disruption of the nuclear pore complex (NPC) via its protease activity. In turn, interacts with vaccinia virus DNA-binding protein OPG079 in the cytoplasm and promotes its degradation without the need of its protease activity but through autophagy. The polypeptide is Serine protease FAM111A (Homo sapiens (Human)).